A 346-amino-acid chain; its full sequence is UPF0283 membrane protein VIBHAR_01918 (346 aa).

A compositionally biased stretch (basic and acidic residues) spans 1-17 (MSELKQKQVFKEKVMHS). Positions 1 to 28 (MSELKQKQVFKEKVMHSEEEDVSPELNT) are disordered. 2 helical membrane passes run 73-93 (LFAT…ITAI) and 98-118 (WLAL…LGAL).

The protein belongs to the UPF0283 family.

It is found in the cell inner membrane. This chain is UPF0283 membrane protein VIBHAR_01918, found in Vibrio campbellii (strain ATCC BAA-1116).